The primary structure comprises 441 residues: tRNA pseudouridine synthase Pus10 (441 aa).

Asp268 acts as the Nucleophile in catalysis. Residues Tyr333 and Tyr405 each coordinate substrate.

This sequence belongs to the pseudouridine synthase Pus10 family.

The enzyme catalyses uridine(54) in tRNA = pseudouridine(54) in tRNA. The catalysed reaction is uridine(55) in tRNA = pseudouridine(55) in tRNA. In terms of biological role, responsible for synthesis of pseudouridine from uracil-54 and uracil-55 in the psi GC loop of transfer RNAs. The polypeptide is tRNA pseudouridine synthase Pus10 (Thermosphaera aggregans (strain DSM 11486 / M11TL)).